The following is a 155-amino-acid chain: Glutamyl-tRNA(Gln) amidotransferase subunit C, chloroplastic/mitochondrial (155 aa).

A chloroplast and mitochondrion-targeting transit peptide spans 1–52 (MATRALLAVIYASPNRCYISPSRIKIQSLTCSSSSHYYQRQSRKNHRIARSY).

Belongs to the GatC family. In terms of assembly, subunit of the heterotrimeric GatCAB amidotransferase (AdT) complex, composed of A, B and C subunits.

Its subcellular location is the mitochondrion. The protein resides in the plastid. It localises to the chloroplast. The enzyme catalyses L-glutamyl-tRNA(Gln) + L-glutamine + ATP + H2O = L-glutaminyl-tRNA(Gln) + L-glutamate + ADP + phosphate + H(+). In terms of biological role, allows the formation of correctly charged Gln-tRNA(Gln) through the transamidation of misacylated Glu-tRNA(Gln) in chloroplasts and mitochondria. The reaction takes place in the presence of glutamine and ATP through an activated gamma-phospho-Glu-tRNA(Gln). This chain is Glutamyl-tRNA(Gln) amidotransferase subunit C, chloroplastic/mitochondrial, found in Arabidopsis thaliana (Mouse-ear cress).